The sequence spans 331 residues: Tetraacyldisaccharide 4'-kinase (331 aa).

58 to 65 (TVGGSGKT) serves as a coordination point for ATP.

Belongs to the LpxK family.

The catalysed reaction is a lipid A disaccharide + ATP = a lipid IVA + ADP + H(+). Its pathway is glycolipid biosynthesis; lipid IV(A) biosynthesis; lipid IV(A) from (3R)-3-hydroxytetradecanoyl-[acyl-carrier-protein] and UDP-N-acetyl-alpha-D-glucosamine: step 6/6. Functionally, transfers the gamma-phosphate of ATP to the 4'-position of a tetraacyldisaccharide 1-phosphate intermediate (termed DS-1-P) to form tetraacyldisaccharide 1,4'-bis-phosphate (lipid IVA). The polypeptide is Tetraacyldisaccharide 4'-kinase (Shewanella denitrificans (strain OS217 / ATCC BAA-1090 / DSM 15013)).